A 49-amino-acid polypeptide reads, in one-letter code: Large ribosomal subunit protein bL33 (49 aa).

The protein belongs to the bacterial ribosomal protein bL33 family.

This Syntrophomonas wolfei subsp. wolfei (strain DSM 2245B / Goettingen) protein is Large ribosomal subunit protein bL33.